Here is a 141-residue protein sequence, read N- to C-terminus: Large ribosomal subunit protein uL16 (141 aa).

This sequence belongs to the universal ribosomal protein uL16 family. As to quaternary structure, part of the 50S ribosomal subunit.

In terms of biological role, binds 23S rRNA and is also seen to make contacts with the A and possibly P site tRNAs. In Aliarcobacter butzleri (strain RM4018) (Arcobacter butzleri), this protein is Large ribosomal subunit protein uL16.